Reading from the N-terminus, the 316-residue chain is Protein FLUORESCENT IN BLUE LIGHT, chloroplastic (316 aa).

A chloroplast-targeting transit peptide spans 1–26; that stretch reads MAALIRCCSSFSHTSGGQPPPRDKSR. Residues 125–145 traverse the membrane as a helical segment; sequence MFSMPILLLVALIGATVGGLL. Positions 144 to 175 form a coiled coil; that stretch reads LLARQRKGELQRLNEQLRQINAALRRQAKIES. TPR repeat units lie at residues 203-236, 243-276, and 283-316; these read LISK…AQSL, KKAA…SKRE, and TEAY…LETD.

Part of the FLU-containing chloroplast membrane complex composed of FLU, CRD1, PORB, PORC, CHLP and HEMA1. Interacts with HEMA1 (via C-terminus) only in the absence of light. No interaction with HEMA2.

The protein localises to the plastid. Its subcellular location is the chloroplast membrane. The protein resides in the chloroplast thylakoid membrane. Functionally, negative regulator of tetrapyrrole biosynthesis (including chlorophyll) in chloroplasts, probably via HEMA1 repression. Inhibits especially the magnesium ion Mg(2+) branch of tetrapyrrole biosynthesis, but independently of heme. This chain is Protein FLUORESCENT IN BLUE LIGHT, chloroplastic (FLU), found in Arabidopsis thaliana (Mouse-ear cress).